The following is a 204-amino-acid chain: Crossover junction endodeoxyribonuclease RuvC (204 aa).

Catalysis depends on residues Asp7, Glu68, and Asp141. Mg(2+) contacts are provided by Asp7, Glu68, and Asp141.

It belongs to the RuvC family. Homodimer which binds Holliday junction (HJ) DNA. The HJ becomes 2-fold symmetrical on binding to RuvC with unstacked arms; it has a different conformation from HJ DNA in complex with RuvA. In the full resolvosome a probable DNA-RuvA(4)-RuvB(12)-RuvC(2) complex forms which resolves the HJ. Requires Mg(2+) as cofactor.

It localises to the cytoplasm. The enzyme catalyses Endonucleolytic cleavage at a junction such as a reciprocal single-stranded crossover between two homologous DNA duplexes (Holliday junction).. In terms of biological role, the RuvA-RuvB-RuvC complex processes Holliday junction (HJ) DNA during genetic recombination and DNA repair. Endonuclease that resolves HJ intermediates. Cleaves cruciform DNA by making single-stranded nicks across the HJ at symmetrical positions within the homologous arms, yielding a 5'-phosphate and a 3'-hydroxyl group; requires a central core of homology in the junction. The consensus cleavage sequence is 5'-(A/T)TT(C/G)-3'. Cleavage occurs on the 3'-side of the TT dinucleotide at the point of strand exchange. HJ branch migration catalyzed by RuvA-RuvB allows RuvC to scan DNA until it finds its consensus sequence, where it cleaves and resolves the cruciform DNA. The sequence is that of Crossover junction endodeoxyribonuclease RuvC from Clavibacter sepedonicus (Clavibacter michiganensis subsp. sepedonicus).